The chain runs to 117 residues: Peptidyl-tRNA hydrolase (117 aa).

This sequence belongs to the PTH2 family.

It localises to the cytoplasm. It carries out the reaction an N-acyl-L-alpha-aminoacyl-tRNA + H2O = an N-acyl-L-amino acid + a tRNA + H(+). In terms of biological role, the natural substrate for this enzyme may be peptidyl-tRNAs which drop off the ribosome during protein synthesis. This chain is Peptidyl-tRNA hydrolase, found in Metallosphaera sedula (strain ATCC 51363 / DSM 5348 / JCM 9185 / NBRC 15509 / TH2).